The sequence spans 157 residues: Transcription elongation factor GreA (157 aa).

A coiled-coil region spans residues 10 to 76; that stretch reads THEGKQKLEQ…TLENMIRNAK (67 aa).

It belongs to the GreA/GreB family.

Functionally, necessary for efficient RNA polymerase transcription elongation past template-encoded arresting sites. The arresting sites in DNA have the property of trapping a certain fraction of elongating RNA polymerases that pass through, resulting in locked ternary complexes. Cleavage of the nascent transcript by cleavage factors such as GreA or GreB allows the resumption of elongation from the new 3'terminus. GreA releases sequences of 2 to 3 nucleotides. The protein is Transcription elongation factor GreA of Bacillus velezensis (strain DSM 23117 / BGSC 10A6 / LMG 26770 / FZB42) (Bacillus amyloliquefaciens subsp. plantarum).